Consider the following 166-residue polypeptide: Methylmalonyl-CoA epimerase, mitochondrial (166 aa).

The N-terminal 23 residues, Met1–Gly23, are a transit peptide targeting the mitochondrion. Residues Lys37–Lys166 form the VOC domain. The Co(2+) site is built by His40, His112, and Glu162.

This sequence belongs to the methylmalonyl-CoA epimerase family.

The protein localises to the mitochondrion. The catalysed reaction is (R)-methylmalonyl-CoA = (S)-methylmalonyl-CoA. Functionally, methylmalonyl-CoA epimerase involved in propionyl-CoA metabolism. This is Methylmalonyl-CoA epimerase, mitochondrial (mcee) from Dictyostelium discoideum (Social amoeba).